The chain runs to 258 residues: GTP cyclohydrolase FolE2 (258 aa).

The protein belongs to the GTP cyclohydrolase IV family.

It carries out the reaction GTP + H2O = 7,8-dihydroneopterin 3'-triphosphate + formate + H(+). It participates in cofactor biosynthesis; 7,8-dihydroneopterin triphosphate biosynthesis; 7,8-dihydroneopterin triphosphate from GTP: step 1/1. Functionally, converts GTP to 7,8-dihydroneopterin triphosphate. This chain is GTP cyclohydrolase FolE2, found in Pseudothermotoga lettingae (strain ATCC BAA-301 / DSM 14385 / NBRC 107922 / TMO) (Thermotoga lettingae).